Reading from the N-terminus, the 166-residue chain is NADH-quinone oxidoreductase subunit E (166 aa).

Residues cysteine 92, cysteine 97, cysteine 133, and cysteine 137 each contribute to the [2Fe-2S] cluster site.

Belongs to the complex I 24 kDa subunit family. Composed of 13 different subunits. Subunits NuoCD, E, F, and G constitute the peripheral sector of the complex. [2Fe-2S] cluster is required as a cofactor.

The catalysed reaction is a quinone + NADH + 5 H(+)(in) = a quinol + NAD(+) + 4 H(+)(out). In terms of biological role, NDH-1 shuttles electrons from NADH, via FMN and iron-sulfur (Fe-S) centers, to quinones in the respiratory chain. The immediate electron acceptor for the enzyme in this species is believed to be ubiquinone. Couples the redox reaction to proton translocation (for every two electrons transferred, four hydrogen ions are translocated across the cytoplasmic membrane), and thus conserves the redox energy in a proton gradient. In Salmonella typhi, this protein is NADH-quinone oxidoreductase subunit E (nuoE).